A 457-amino-acid polypeptide reads, in one-letter code: Argininosuccinate lyase (457 aa).

It belongs to the lyase 1 family. Argininosuccinate lyase subfamily.

The protein localises to the cytoplasm. The enzyme catalyses 2-(N(omega)-L-arginino)succinate = fumarate + L-arginine. Its pathway is amino-acid biosynthesis; L-arginine biosynthesis; L-arginine from L-ornithine and carbamoyl phosphate: step 3/3. This Klebsiella pneumoniae subsp. pneumoniae (strain ATCC 700721 / MGH 78578) protein is Argininosuccinate lyase.